Consider the following 438-residue polypeptide: GTPase Der (438 aa).

EngA-type G domains are found at residues 4–168 (PVVA…PAGA) and 176–351 (VRIA…GEYR). GTP contacts are provided by residues 10-17 (GRPNVGKS), 57-61 (DTGGI), 120-123 (NKVD), 182-189 (GRPNVGKS), 229-233 (DTAGM), and 294-297 (NKWD). Residues 352–436 (RQIPTSMLNR…PVRILFRRRE (85 aa)) form the KH-like domain.

It belongs to the TRAFAC class TrmE-Era-EngA-EngB-Septin-like GTPase superfamily. EngA (Der) GTPase family. Associates with the 50S ribosomal subunit.

In terms of biological role, GTPase that plays an essential role in the late steps of ribosome biogenesis. This chain is GTPase Der, found in Desulforudis audaxviator (strain MP104C).